Here is a 211-residue protein sequence, read N- to C-terminus: Thiamine-phosphate synthase (211 aa).

4-amino-2-methyl-5-(diphosphooxymethyl)pyrimidine contacts are provided by residues 37 to 41 and Asn-69; that span reads QLRIK. The Mg(2+) site is built by Asp-70 and Asp-89. Ser-108 contributes to the 4-amino-2-methyl-5-(diphosphooxymethyl)pyrimidine binding site. Residue 134 to 136 participates in 2-[(2R,5Z)-2-carboxy-4-methylthiazol-5(2H)-ylidene]ethyl phosphate binding; it reads TQT. Residue Lys-137 participates in 4-amino-2-methyl-5-(diphosphooxymethyl)pyrimidine binding. 2-[(2R,5Z)-2-carboxy-4-methylthiazol-5(2H)-ylidene]ethyl phosphate is bound by residues Gly-166 and 186–187; that span reads VS.

This sequence belongs to the thiamine-phosphate synthase family. It depends on Mg(2+) as a cofactor.

The catalysed reaction is 2-[(2R,5Z)-2-carboxy-4-methylthiazol-5(2H)-ylidene]ethyl phosphate + 4-amino-2-methyl-5-(diphosphooxymethyl)pyrimidine + 2 H(+) = thiamine phosphate + CO2 + diphosphate. It carries out the reaction 2-(2-carboxy-4-methylthiazol-5-yl)ethyl phosphate + 4-amino-2-methyl-5-(diphosphooxymethyl)pyrimidine + 2 H(+) = thiamine phosphate + CO2 + diphosphate. The enzyme catalyses 4-methyl-5-(2-phosphooxyethyl)-thiazole + 4-amino-2-methyl-5-(diphosphooxymethyl)pyrimidine + H(+) = thiamine phosphate + diphosphate. It functions in the pathway cofactor biosynthesis; thiamine diphosphate biosynthesis; thiamine phosphate from 4-amino-2-methyl-5-diphosphomethylpyrimidine and 4-methyl-5-(2-phosphoethyl)-thiazole: step 1/1. Its function is as follows. Condenses 4-methyl-5-(beta-hydroxyethyl)thiazole monophosphate (THZ-P) and 2-methyl-4-amino-5-hydroxymethyl pyrimidine pyrophosphate (HMP-PP) to form thiamine monophosphate (TMP). The protein is Thiamine-phosphate synthase of Salmonella schwarzengrund (strain CVM19633).